We begin with the raw amino-acid sequence, 163 residues long: NADH-quinone oxidoreductase subunit I (163 aa).

4Fe-4S ferredoxin-type domains are found at residues 53–83 (LRRY…IEAG) and 94–123 (TLYD…LTPE). 8 residues coordinate [4Fe-4S] cluster: Cys-63, Cys-66, Cys-69, Cys-73, Cys-103, Cys-106, Cys-109, and Cys-113.

It belongs to the complex I 23 kDa subunit family. NDH-1 is composed of 14 different subunits. Subunits NuoA, H, J, K, L, M, N constitute the membrane sector of the complex. [4Fe-4S] cluster is required as a cofactor.

It localises to the cell inner membrane. It carries out the reaction a quinone + NADH + 5 H(+)(in) = a quinol + NAD(+) + 4 H(+)(out). NDH-1 shuttles electrons from NADH, via FMN and iron-sulfur (Fe-S) centers, to quinones in the respiratory chain. The immediate electron acceptor for the enzyme in this species is believed to be ubiquinone. Couples the redox reaction to proton translocation (for every two electrons transferred, four hydrogen ions are translocated across the cytoplasmic membrane), and thus conserves the redox energy in a proton gradient. This chain is NADH-quinone oxidoreductase subunit I, found in Coxiella burnetii (strain Dugway 5J108-111).